Here is a 279-residue protein sequence, read N- to C-terminus: Pantothenate synthetase (279 aa).

Residue 26–33 (MGALHSGH) coordinates ATP. His33 acts as the Proton donor in catalysis. Residue Gln57 participates in (R)-pantoate binding. Beta-alanine is bound at residue Gln57. 147 to 150 (GQKD) serves as a coordination point for ATP. A (R)-pantoate-binding site is contributed by Gln153. ATP contacts are provided by residues Ile176 and 184 to 187 (ESSR).

It belongs to the pantothenate synthetase family. In terms of assembly, homodimer.

The protein resides in the cytoplasm. It carries out the reaction (R)-pantoate + beta-alanine + ATP = (R)-pantothenate + AMP + diphosphate + H(+). Its pathway is cofactor biosynthesis; (R)-pantothenate biosynthesis; (R)-pantothenate from (R)-pantoate and beta-alanine: step 1/1. Catalyzes the condensation of pantoate with beta-alanine in an ATP-dependent reaction via a pantoyl-adenylate intermediate. The sequence is that of Pantothenate synthetase from Corynebacterium glutamicum (strain R).